An 83-amino-acid polypeptide reads, in one-letter code: Beta-toxin Ct7 (83 aa).

A signal peptide spans 1–18 (MKVLILIIASVLLIGVEC). The 63-residue stretch at 19–81 (KDGYPMNSEG…VWDSATNKCG (63 aa)) folds into the LCN-type CS-alpha/beta domain. 4 disulfides stabilise this stretch: C29–C80, C33–C54, C40–C61, and C44–C63. At G81 the chain carries Glycine amide. A propeptide is located at residue G82.

Belongs to the long (4 C-C) scorpion toxin superfamily. Sodium channel inhibitor family. Beta subfamily. Expressed by the venom gland.

Its subcellular location is the secreted. Beta toxins bind voltage-independently at site-4 of sodium channels (Nav) and shift the voltage of activation toward more negative potentials thereby affecting sodium channel activation and promoting spontaneous and repetitive firing. Is possibly toxic to mice, freshwater shrimp and crickets. This chain is Beta-toxin Ct7, found in Centruroides tecomanus (Scorpion).